The primary structure comprises 429 residues: L-threonine dehydratase biosynthetic IlvA (429 aa).

Lysine 66 is modified (N6-(pyridoxal phosphate)lysine). Pyridoxal 5'-phosphate contacts are provided by residues asparagine 93, 196-200, and serine 322; that span reads GGGGC. The ACT-like domain occupies 346-420; that stretch reads HYFLVDFPQE…TDIHVEALEP (75 aa).

The protein belongs to the serine/threonine dehydratase family. As to quaternary structure, homotetramer. The cofactor is pyridoxal 5'-phosphate.

It catalyses the reaction L-threonine = 2-oxobutanoate + NH4(+). It functions in the pathway amino-acid biosynthesis; L-isoleucine biosynthesis; 2-oxobutanoate from L-threonine: step 1/1. Its function is as follows. Catalyzes the anaerobic formation of alpha-ketobutyrate and ammonia from threonine in a two-step reaction. The first step involved a dehydration of threonine and a production of enamine intermediates (aminocrotonate), which tautomerizes to its imine form (iminobutyrate). Both intermediates are unstable and short-lived. The second step is the nonenzymatic hydrolysis of the enamine/imine intermediates to form 2-ketobutyrate and free ammonia. In the low water environment of the cell, the second step is accelerated by RidA. The protein is L-threonine dehydratase biosynthetic IlvA (ilvA) of Mycobacterium bovis (strain ATCC BAA-935 / AF2122/97).